The sequence spans 536 residues: T-complex protein 1 subunit delta (536 aa).

The disordered stretch occupies residues 1–21 (MAAVAAPMASKPRGSKAESFV).

The protein belongs to the TCP-1 chaperonin family. Heterooligomeric complex of about 850 to 900 kDa that forms two stacked rings, 12 to 16 nm in diameter.

Its subcellular location is the cytoplasm. Functionally, molecular chaperone; assists the folding of proteins upon ATP hydrolysis. Known to play a role, in vitro, in the folding of actin and tubulin. This Arabidopsis thaliana (Mouse-ear cress) protein is T-complex protein 1 subunit delta.